We begin with the raw amino-acid sequence, 545 residues long: MYCAKLILLLGCFWISSSASDPADPLLVDLPNGKLRGRDNGNYYSYESLPYAEPPVGDLRFEAPQPYKQQWTDTFDATQPPVSCMQWDQFIRGDDKLAGNEDCLTVSVYRPKNSSRNSFPVVAQIHGGAFMFGGASQNGHENFMREGNLILVKISYRLGPLGFVSTGDADLSGNFGLKDQRLALLWIKQNIASFGGEPENILVIGHSAGGGSVHLQVLREDFSKVAKAAISFSGNALDPWVVQQGGRGRAFELGRIVGCGQASDSVTLKKCLKSKPASEIVSAVRNFLVFAYVPFTPFGPVVESPDAPEAFISQHPVDIIKSGKFAQVPWAVTYTTEDGGYNAALLLEEQASSGREWIVDLNDRWFDWAPYLLFYRDSMTTIKDMDDYSRKLRQEYLGDRRFSVESYWDLQRLFTDVLFKNSTEISLDLHRKHGKSPVYAFVYDNPANTGIGQGLAQRTDINFGTVHGDDYFLIFENIVREPQLRSDEETISRNFLKMLNDFVLSENGTLAFGTCVFQDNVGSSKLQLLSITRNGCENLELESFP.

The N-terminal stretch at 1–19 (MYCAKLILLLGCFWISSSA) is a signal peptide. An intrachain disulfide couples Cys84 to Cys103. A glycan (N-linked (GlcNAc...) asparagine) is linked at Asn113. Ser207 functions as the Acyl-ester intermediate in the catalytic mechanism. Residues Cys259 and Cys271 are joined by a disulfide bond. Asn421 carries N-linked (GlcNAc...) asparagine glycosylation. His467 (charge relay system) is an active-site residue. N-linked (GlcNAc...) asparagine glycosylation occurs at Asn507. A disulfide bridge links Cys515 with Cys536.

The protein belongs to the type-B carboxylesterase/lipase family. Homodimer.

The protein localises to the secreted. It catalyses the reaction a carboxylic ester + H2O = an alcohol + a carboxylate + H(+). The polypeptide is Esterase-5B (Est-5B) (Drosophila persimilis (Fruit fly)).